Reading from the N-terminus, the 147-residue chain is Large ribosomal subunit protein uL15 (147 aa).

Residues 1-59 form a disordered region; sequence MKLYELKPAPGSKKNRKRVGRGESSGHGKTSTRGHKGQWARSGGGVRPGFEGGQMPLTR. The span at 42 to 52 shows a compositional bias: gly residues; sequence SGGGVRPGFEG.

It belongs to the universal ribosomal protein uL15 family. As to quaternary structure, part of the 50S ribosomal subunit.

Binds to the 23S rRNA. This chain is Large ribosomal subunit protein uL15, found in Caldicellulosiruptor bescii (strain ATCC BAA-1888 / DSM 6725 / KCTC 15123 / Z-1320) (Anaerocellum thermophilum).